Here is a 147-residue protein sequence, read N- to C-terminus: UPF0178 protein CV_1768 (147 aa).

Belongs to the UPF0178 family.

The polypeptide is UPF0178 protein CV_1768 (Chromobacterium violaceum (strain ATCC 12472 / DSM 30191 / JCM 1249 / CCUG 213 / NBRC 12614 / NCIMB 9131 / NCTC 9757 / MK)).